The chain runs to 220 residues: Sugar transporter SWEET1 (220 aa).

7 helical membrane-spanning segments follow: residues 9–29 (LMTF…IMPL), 44–64 (VAGL…SYAL), 70–90 (TMLF…FNYW), 106–126 (VMIA…NTVD), 138–158 (LSSV…AIVI), 167–187 (IINV…FGLL), and 191–211 (IYIY…LTLI). One can recognise a MtN3/slv 1 domain in the interval 12–92 (FIQFCATFIT…IYYVFNYWKN (81 aa)). In terms of domain architecture, MtN3/slv 2 spans 134–217 (RLGFLSSVVC…LTLIKLYPPQ (84 aa)).

Belongs to the SWEET sugar transporter family.

The protein resides in the golgi apparatus membrane. It is found in the cell membrane. In terms of biological role, mediates both low-affinity uptake and efflux of sugar across the membrane. The protein is Sugar transporter SWEET1 (slc50a1) of Dictyostelium discoideum (Social amoeba).